Here is a 197-residue protein sequence, read N- to C-terminus: dCTP deaminase (197 aa).

Residues Arg110–Arg115, Asp128, Val136–Glu138, Tyr171, and Gln182 contribute to the dCTP site. The active-site Proton donor/acceptor is Glu138.

It belongs to the dCTP deaminase family. As to quaternary structure, homotrimer.

It catalyses the reaction dCTP + H2O + H(+) = dUTP + NH4(+). It participates in pyrimidine metabolism; dUMP biosynthesis; dUMP from dCTP (dUTP route): step 1/2. Its function is as follows. Catalyzes the deamination of dCTP to dUTP. This chain is dCTP deaminase, found in Alteromonas mediterranea (strain DSM 17117 / CIP 110805 / LMG 28347 / Deep ecotype).